The chain runs to 397 residues: Elongation factor Tu 1 (397 aa).

The 197-residue stretch at 10-206 (KPHVNIGTIG…AIDTWIPEPV (197 aa)) folds into the tr-type G domain. A G1 region spans residues 19-26 (GHVDHGKT). 19–26 (GHVDHGKT) provides a ligand contact to GTP. Residue Thr26 participates in Mg(2+) binding. The segment at 61–65 (GITIS) is G2. The interval 82–85 (DCPG) is G3. Residues 82 to 86 (DCPGH) and 137 to 140 (NKCD) each bind GTP. The G4 stretch occupies residues 137–140 (NKCD). The segment at 175–177 (SAL) is G5.

This sequence belongs to the TRAFAC class translation factor GTPase superfamily. Classic translation factor GTPase family. EF-Tu/EF-1A subfamily. As to quaternary structure, monomer.

It localises to the cytoplasm. It carries out the reaction GTP + H2O = GDP + phosphate + H(+). GTP hydrolase that promotes the GTP-dependent binding of aminoacyl-tRNA to the A-site of ribosomes during protein biosynthesis. This chain is Elongation factor Tu 1, found in Alkaliphilus metalliredigens (strain QYMF).